Reading from the N-terminus, the 323-residue chain is tRNA dimethylallyltransferase (323 aa).

12–19 serves as a coordination point for ATP; the sequence is GPTAAGKT. 14 to 19 lines the substrate pocket; the sequence is TAAGKT. 2 interaction with substrate tRNA regions span residues 37–40 and 161–165; these read DSAL and QRLIR.

The protein belongs to the IPP transferase family. In terms of assembly, monomer. It depends on Mg(2+) as a cofactor.

The catalysed reaction is adenosine(37) in tRNA + dimethylallyl diphosphate = N(6)-dimethylallyladenosine(37) in tRNA + diphosphate. Its function is as follows. Catalyzes the transfer of a dimethylallyl group onto the adenine at position 37 in tRNAs that read codons beginning with uridine, leading to the formation of N6-(dimethylallyl)adenosine (i(6)A). The polypeptide is tRNA dimethylallyltransferase (Pseudomonas putida (strain GB-1)).